An 863-amino-acid polypeptide reads, in one-letter code: MSGEQQLDADLGSGVEVEEFSWEDYLEETGSTTVPYASFKHVDIRLQNGFAPGMKLEVALKNDPETYWVATIITACEQLLLLRYEGYGEDRKADFWCDIRKAGLYPIGWCQQNKKTLEAPEGIRDKVSDWNAFLQQTLIGACGPPVSLLEGLRNGRNPLDLIAPGSKLECQDFRDSLSTWLVTVVENIGGRLKLRYEGLESRDGFEHWLYYLDPFLHHIGWAAQQGCDLQPPLAIKHLKSEADWQEILAKVKEEEPLPSYLFKDKQVIGTHEFSINMKLEAVDPWSPFGISPATIAKVFDDKYFLVEMDDLRPEDHTRRSFVCHANSPGIFPVQWSLKNGLHINPPPGFRSQDFDWADYLKQCGAEAAPQKCFPQSISEHQFKENMKLEAVNPLFPEEVCIATVTAVRGSYLWLQLEGSKKPVPEFIVSAESMNIFPLGWCETNGHPLSTPRRARGHKLRKIAVVQPEKQILSSRTVHEGLKNQLNSTHSVMINGKYCCPKIYFNHRCFSGPYLNKGRIAELPQCVGPGNCVLVLREVLTLLINAAYKPSRVLRELQLDKDSVWHGCGEVLKAKYKGKSYRATVEIVRTADRVTEFCRQTCIKLECCPNLFGPRMVLDTCSENCSVLTKTKYTHYYGKKKNKRIGRPPGGHSNLSCALKKSSKRRKRRKNIFVHKKKRSSASVDNTPVGSPQGSGGEDEEDADDGDEDSLTEGSTSEQQEELQEESEVSEKKSSSSSPTQSETPTPLPPDTQTNKRDAQTSSVSDDENKPPSPKEIRIEVDERLHLDSNPLKWSVADVVRFIRSTDCAPLARIFLDQEIDGQALLLLTLPTVQECMDLKLGPAIKLCHHIERIKFAFYEQFAN.

MBT repeat units lie at residues 20 to 120 (FSWE…LEAP), 128 to 232 (SDWN…LQPP), 242 to 346 (ADWQ…INPP), and 354 to 451 (FDWA…LSTP). A disordered region spans residues 638-773 (KKKNKRIGRP…SDDENKPPSP (136 aa)). The segment covering 660-679 (KSSKRRKRRKNIFVHKKKRS) has biased composition (basic residues). A compositionally biased stretch (polar residues) spans 680–691 (SASVDNTPVGSP). Composition is skewed to acidic residues over residues 696-710 (GEDEEDADDGDEDSL) and 718-727 (QQEELQEESE). Over residues 734–744 (SSSSPTQSETP) the composition is skewed to low complexity. Ser-764 and Ser-772 each carry phosphoserine. The region spanning 793–861 (WSVADVVRFI…RIKFAFYEQF (69 aa)) is the SAM domain.

Interacts with MYOD1. Component of the SLC (SFMBT1-LSD1-CoREST) corepressor complex, which also contains KDM1A/LSD1 and RCOR1/CoREST. Interacts with KDM1A/LSD1 and RCOR1/CoREST. Interacts with MYOD1. Interacts with L3MBTL3. Highly expressed in the testis, low expression is detected in brain, kidney, heart and lung. Highly expressed in germ cells, where it associates with the synaptic regions of meiotic chromosomes in pachytene stage spermatocytes.

It localises to the nucleus. Functionally, histone-binding protein, which is part of various corepressor complexes. Mediates the recruitment of corepressor complexes to target genes, followed by chromatin compaction and repression of transcription. Plays a role during myogenesis: required for the maintenance of undifferentiated states of myogenic progenitor cells via interaction with MYOD1. Interaction with MYOD1 leads to the recruitment of associated corepressors and silencing of MYOD1 target genes. Part of the SLC complex in germ cells, where it may play a role during spermatogenesis. The protein is Scm-like with four MBT domains protein 1 (Sfmbt1) of Mus musculus (Mouse).